The chain runs to 500 residues: MSEGKVDEFMAITGADDAAIATQFIEMADGNLNTAISLFFENGGAALLSSNNTPTPSNSTPMAPTSVDSDADAQLAERLQREAYQQQQPDQDYVRPPDEARHEVLTETSGFPISYGGIGGRFEPLHRVNDMFDEGRPESIFNQRLDDTNTNTYINDNSSDSLDSEEENDDDEYEYVEEPVIELDEDGNIKEYTKLVRKPKTISKEQKLALLFRPPFSIMSKLDLDAAKQKARAKQKWIMINIQDSGIFQCQALNRDLWSSRPVKTIIKENFVFLQYQYESRNAQPYLQFYHLNNKDDLPHIAILDPITGERVKQWNRVVPIPEQFISEINEFLASFSLDPKVPNPTVNEPLPKVDPTTLTEEQQMELAIKESLNNNSSKSNQEEVPSTGEEQKRVQEPDPFSTIEARVHPEPPNKPGITTRIQIRTGDGSRLVRRFNALEDTVRTIYEVIKTEMDGFADSRFTLNDHQREDLIDKLNMTIADAGLKNSSLLLEKLDPEIE.

The segment covering 50–61 has biased composition (low complexity); that stretch reads SNNTPTPSNSTP. The segment at 50-70 is disordered; it reads SNNTPTPSNSTPMAPTSVDSD. Ser139 is modified (phosphoserine). Disordered stretches follow at residues 142-169 and 371-399; these read NQRL…EEND and ESLN…QEPD. Residues 148–161 show a composition bias toward low complexity; sequence TNTNTYINDNSSDS. The UBX domain occupies 415 to 493; that stretch reads KPGITTRIQI…GLKNSSLLLE (79 aa).

As to quaternary structure, interacts with CDC48.

It is found in the nucleus. The protein resides in the cytoplasm. Functionally, involved in CDC48-dependent protein degradation through the ubiquitin/proteasome pathway. The polypeptide is UBX domain-containing protein 5 (UBX5) (Saccharomyces cerevisiae (strain ATCC 204508 / S288c) (Baker's yeast)).